We begin with the raw amino-acid sequence, 456 residues long: Gamma-aminobutyric acid receptor subunit alpha-1 (456 aa).

A signal peptide spans 1–27 (MKKSPGLSDYLWAWTLFLSTLTGRSYG). At 28–253 (QPSLQDELKD…FHLKRKIGYF (226 aa)) the chain is on the extracellular side. N-linked (GlcNAc...) asparagine glycosylation is present at Asn38. Position 94 (Arg94) interacts with 4-aminobutanoate. Asn138 carries an N-linked (GlcNAc...) asparagine glycan. Thr157 contributes to the 4-aminobutanoate binding site. Cys166 and Cys180 are oxidised to a cystine. Residues 254–274 (VIQTYLPCIMTVILSQVSFWL) form a helical membrane-spanning segment. At 275-279 (NRESV) the chain is on the cytoplasmic side. Residues 280–301 (PARTVFGVTTVLTMTTLSISAR) traverse the membrane as a helical segment. Residues 302-311 (NSLPKVAYAT) lie on the Extracellular side of the membrane. A helical transmembrane segment spans residues 312–333 (AMDWFIAVCYAFVFSALIEFAT). The Cytoplasmic segment spans residues 334-421 (VNYFTKRGYA…TFNSVSKIDR (88 aa)). The chain crosses the membrane as a helical span at residues 422–441 (LSRIAFPLLFGIFNLVYWAT). Residues 442–456 (YLNREPQLKAPTPHQ) are Extracellular-facing.

This sequence belongs to the ligand-gated ion channel (TC 1.A.9) family. Gamma-aminobutyric acid receptor (TC 1.A.9.5) subfamily. GABRA1 sub-subfamily. Heteropentamer, formed by a combination of alpha (GABRA1-6), beta (GABRB1-3), gamma (GABRG1-3), delta (GABRD), epsilon (GABRE), rho (GABRR1-3), pi (GABRP) and theta (GABRQ) subunits, each subunit exhibiting distinct physiological and pharmacological properties. Interacts with UBQLN1. Interacts with TRAK1. Interacts with KIF21B. Identified in a complex of 720 kDa composed of LHFPL4, NLGN2, GABRA1, GABRB2, GABRG2 and GABRB3. Interacts with LHFPL4. Interacts with NLGN2. Interacts with SHISA7; interaction leads to the regulation of GABA(A) receptor trafficking, channel deactivation kinetics and pharmacology. In terms of tissue distribution, cerebellar granule cells, Purkinje cells and stellate/basket cells.

The protein resides in the postsynaptic cell membrane. It localises to the cell membrane. It is found in the cytoplasmic vesicle membrane. It carries out the reaction chloride(in) = chloride(out). Allosterically activated by benzodiazepines, the neuroanesthetic alphaxalone and pentobarbital. Inhibited by the antagonist bicuculline. Potentiated by histamine. In terms of biological role, alpha subunit of the heteropentameric ligand-gated chloride channel gated by gamma-aminobutyric acid (GABA), a major inhibitory neurotransmitter in the brain. GABA-gated chloride channels, also named GABA(A) receptors (GABAAR), consist of five subunits arranged around a central pore and contain GABA active binding site(s) located at the alpha and beta subunit interface(s). When activated by GABA, GABAARs selectively allow the flow of chloride anions across the cell membrane down their electrochemical gradient. Alpha-1/GABRA1-containing GABAARs are largely synaptic. Chloride influx into the postsynaptic neuron following GABAAR opening decreases the neuron ability to generate a new action potential, thereby reducing nerve transmission. GABAARs containing alpha-1 and beta-2 or -3 subunits exhibit synaptogenic activity; the gamma-2 subunit being necessary but not sufficient to induce rapid synaptic contacts formation. GABAARs function also as histamine receptor where histamine binds at the interface of two neighboring beta subunits and potentiates GABA response. GABAARs containing alpha, beta and epsilon subunits also permit spontaneous chloride channel activity while preserving the structural information required for GABA-gated openings. Alpha-1-mediated plasticity in the orbitofrontal cortex regulates context-dependent action selection. Together with rho subunits, may also control neuronal and glial GABAergic transmission in the cerebellum. The chain is Gamma-aminobutyric acid receptor subunit alpha-1 (GABRA1) from Bos taurus (Bovine).